The primary structure comprises 381 residues: Lipopolysaccharide 1,2-N-acetylglucosaminetransferase (381 aa).

Belongs to the glycosyltransferase group 1 family. Glycosyltransferase 4 subfamily.

It localises to the cell inner membrane. It catalyses the reaction UDP-N-acetyl-alpha-D-glucosamine + [lipopolysaccharide] = UDP + N-acetyl-alpha-D-glucosaminyl-[lipopolysaccharide].. It functions in the pathway bacterial outer membrane biogenesis; LPS core biosynthesis. In terms of biological role, transferase involved in the biosynthesis of the core oligosaccharide region of lipopolysaccharide (LPS). Catalyzes the addition of the terminal N-acetyl-D-glucosamine (GlcNAc) group to the outer-core glucose II, the last step of the lipid A-core oligosaccharide biosynthesis. The polypeptide is Lipopolysaccharide 1,2-N-acetylglucosaminetransferase (Salmonella typhimurium (strain LT2 / SGSC1412 / ATCC 700720)).